The primary structure comprises 542 residues: Bifunctional NAD(P)H-hydrate repair enzyme Nnr (542 aa).

The segment at 1–243 (MASSDAEALC…PFVLDRAAEK (243 aa)) is NAD(P)H-hydrate epimerase. In terms of domain architecture, YjeF N-terminal spans 19 to 238 (MQAADRYTIE…DIGMPPFVLD (220 aa)). Residues 69 to 73 (NNGGD) are NADPHX 1; for epimerase activity. The K(+) site is built by asparagine 70 and aspartate 148. The NADPHX 1; for epimerase activity stretch occupies residues 152–158 (GTGLTSD). Aspartate 181 provides a ligand contact to (6S)-NADPHX. Threonine 184 provides a ligand contact to K(+). Positions 251–534 (TDAAVRAWWP…DMIPRVAAER (284 aa)) constitute a YjeF C-terminal domain. The tract at residues 251 to 542 (TDAAVRAWWP…ERFGEGRRQR (292 aa)) is ADP-dependent (S)-NAD(P)H-hydrate dehydratase. (6S)-NADPHX is bound at residue glycine 358. The interval 410 to 416 (HAGEFRR) is NADPHX 2; for dehydratase activity. ADP-binding positions include 445–449 (KGMPS) and 465–474 (TPALATAGTG). Aspartate 475 is a (6S)-NADPHX binding site.

This sequence in the N-terminal section; belongs to the NnrE/AIBP family. The protein in the C-terminal section; belongs to the NnrD/CARKD family. Requires K(+) as cofactor.

The catalysed reaction is (6S)-NADHX + ADP = AMP + phosphate + NADH + H(+). The enzyme catalyses (6S)-NADPHX + ADP = AMP + phosphate + NADPH + H(+). It carries out the reaction (6R)-NADHX = (6S)-NADHX. It catalyses the reaction (6R)-NADPHX = (6S)-NADPHX. Functionally, bifunctional enzyme that catalyzes the epimerization of the S- and R-forms of NAD(P)HX and the dehydration of the S-form of NAD(P)HX at the expense of ADP, which is converted to AMP. This allows the repair of both epimers of NAD(P)HX, a damaged form of NAD(P)H that is a result of enzymatic or heat-dependent hydration. This is Bifunctional NAD(P)H-hydrate repair enzyme Nnr (nnr) from Salinibacter ruber (strain DSM 13855 / M31).